The primary structure comprises 31 residues: U1-theraphotoxin-Cv1a (31 aa).

3 disulfides stabilise this stretch: C2–C16, C9–C21, and C15–C28.

As to expression, expressed by the venom gland.

Its subcellular location is the secreted. Its function is as follows. Insecticidal toxin that induces reversible paralysis in crickets but not in cockroaches and mice. Molecular target unknown. The polypeptide is U1-theraphotoxin-Cv1a (Coremiocnemis valida (Singapore tarantula)).